The primary structure comprises 118 residues: NADPH-dependent 7-cyano-7-deazaguanine reductase (118 aa).

C34 acts as the Thioimide intermediate in catalysis. D41 serves as the catalytic Proton donor. Residues 56-58 (VEL) and 75-76 (HE) each bind substrate.

Belongs to the GTP cyclohydrolase I family. QueF type 1 subfamily.

Its subcellular location is the cytoplasm. The catalysed reaction is 7-aminomethyl-7-carbaguanine + 2 NADP(+) = 7-cyano-7-deazaguanine + 2 NADPH + 3 H(+). It functions in the pathway tRNA modification; tRNA-queuosine biosynthesis. Functionally, catalyzes the NADPH-dependent reduction of 7-cyano-7-deazaguanine (preQ0) to 7-aminomethyl-7-deazaguanine (preQ1). The protein is NADPH-dependent 7-cyano-7-deazaguanine reductase of Halorhodospira halophila (strain DSM 244 / SL1) (Ectothiorhodospira halophila (strain DSM 244 / SL1)).